The following is a 393-amino-acid chain: Tryptophan synthase beta chain (393 aa).

At Lys-85 the chain carries N6-(pyridoxal phosphate)lysine.

Belongs to the TrpB family. In terms of assembly, tetramer of two alpha and two beta chains. It depends on pyridoxal 5'-phosphate as a cofactor.

It catalyses the reaction (1S,2R)-1-C-(indol-3-yl)glycerol 3-phosphate + L-serine = D-glyceraldehyde 3-phosphate + L-tryptophan + H2O. The protein operates within amino-acid biosynthesis; L-tryptophan biosynthesis; L-tryptophan from chorismate: step 5/5. Its function is as follows. The beta subunit is responsible for the synthesis of L-tryptophan from indole and L-serine. This is Tryptophan synthase beta chain (trpB) from Helicobacter pylori (strain ATCC 700392 / 26695) (Campylobacter pylori).